We begin with the raw amino-acid sequence, 396 residues long: Tryptophan synthase beta chain (396 aa).

Lys86 is modified (N6-(pyridoxal phosphate)lysine).

This sequence belongs to the TrpB family. In terms of assembly, tetramer of two alpha and two beta chains. Pyridoxal 5'-phosphate serves as cofactor.

The enzyme catalyses (1S,2R)-1-C-(indol-3-yl)glycerol 3-phosphate + L-serine = D-glyceraldehyde 3-phosphate + L-tryptophan + H2O. Its pathway is amino-acid biosynthesis; L-tryptophan biosynthesis; L-tryptophan from chorismate: step 5/5. Functionally, the beta subunit is responsible for the synthesis of L-tryptophan from indole and L-serine. The chain is Tryptophan synthase beta chain from Aliivibrio fischeri (strain ATCC 700601 / ES114) (Vibrio fischeri).